Reading from the N-terminus, the 250-residue chain is Ribosomal RNA-processing protein 15 (250 aa).

The segment covering 1–27 has biased composition (basic and acidic residues); sequence MGSKHRVDTKDKKRTRKNAEFGREKRN. The interval 1–101 is disordered; it reads MGSKHRVDTK…NSKHDDGSTG (101 aa). Acidic residues-rich tracts occupy residues 43–53 and 67–83; these read MEGDEAEEDEQ and EQSD…EDDD. Phosphoserine is present on Ser69.

It belongs to the RRP15 family.

It localises to the nucleus. Its subcellular location is the nucleolus. Its function is as follows. Constituent of pre-60S ribosomal particles. Required for large subunit rRNA maturation, in particular processing of the 27S pre-rRNA at the A3 and B1 sites to yield 5.8S and 25S rRNA. The polypeptide is Ribosomal RNA-processing protein 15 (Saccharomyces cerevisiae (strain ATCC 204508 / S288c) (Baker's yeast)).